The primary structure comprises 372 residues: DNA replication and repair protein RecF (372 aa).

ATP is bound at residue 30 to 37 (GENGQGKT).

Belongs to the RecF family.

Its subcellular location is the cytoplasm. Its function is as follows. The RecF protein is involved in DNA metabolism; it is required for DNA replication and normal SOS inducibility. RecF binds preferentially to single-stranded, linear DNA. It also seems to bind ATP. The protein is DNA replication and repair protein RecF of Anaeromyxobacter dehalogenans (strain 2CP-C).